The following is a 151-amino-acid chain: SsrA-binding protein (151 aa).

The disordered stretch occupies residues 124 to 151; the sequence is GKKLHDKRESEKERDWNRQKSRLLKAHG. A compositionally biased stretch (basic and acidic residues) spans 129–141; that stretch reads DKRESEKERDWNR. A compositionally biased stretch (basic residues) spans 142 to 151; the sequence is QKSRLLKAHG.

The protein belongs to the SmpB family.

It is found in the cytoplasm. In terms of biological role, required for rescue of stalled ribosomes mediated by trans-translation. Binds to transfer-messenger RNA (tmRNA), required for stable association of tmRNA with ribosomes. tmRNA and SmpB together mimic tRNA shape, replacing the anticodon stem-loop with SmpB. tmRNA is encoded by the ssrA gene; the 2 termini fold to resemble tRNA(Ala) and it encodes a 'tag peptide', a short internal open reading frame. During trans-translation Ala-aminoacylated tmRNA acts like a tRNA, entering the A-site of stalled ribosomes, displacing the stalled mRNA. The ribosome then switches to translate the ORF on the tmRNA; the nascent peptide is terminated with the 'tag peptide' encoded by the tmRNA and targeted for degradation. The ribosome is freed to recommence translation, which seems to be the essential function of trans-translation. In Rhizobium johnstonii (strain DSM 114642 / LMG 32736 / 3841) (Rhizobium leguminosarum bv. viciae), this protein is SsrA-binding protein.